Reading from the N-terminus, the 594-residue chain is Insulin-like growth factor 2 mRNA-binding protein 3-A (594 aa).

RRM domains are found at residues 2–75 (NKLY…HSVP) and 81–156 (RKLQ…YIPD). Residues 161–177 (PQAPSQQLQQQPQQQHP) show a composition bias toward low complexity. Residues 161–206 (PQAPSQQLQQQPQQQHPQGRRGFGQRGPARQGSPGAAARPKPQTEV) form a disordered region. KH domains are found at residues 205–270 (EVPL…CKII) and 286–353 (EIPL…EEEI). The segment at 392–415 (GMPPPSVGVPSPTSSTSYPPFGQQ) is disordered. Residues 399–411 (GVPSPTSSTSYPP) show a composition bias toward low complexity. 2 consecutive KH domains span residues 418–483 (SETV…QGRI) and 500–566 (KLET…QRKI).

This sequence belongs to the RRM IMP/VICKZ family. As to quaternary structure, homodimer and multimer. Associates with microtubules. Interaction with a translocation machinery protein TRAPA of the endoplasmic reticulum. Component of a mRNP complex, at least composed of DAZAP1, IGF2BP3, STAU and VgRBP60. The mRNP complex with DAZAP1, IGF2BP3, STAU and VgRBP60 is only found in the cytoplasm. Interacts with a hnRNP 1 related RNA transport protein VgRBP60 both in the nucleus (in a RNA-independent manner) and the cytoplasm (in a RNA-dependent manner). Found in a B3 activator complex.

The protein localises to the nucleus. It is found in the cytoplasm. The protein resides in the endoplasmic reticulum. RNA-binding protein that acts as a regulator of mRNA transport and localization. Binds to the RNA sequence motif 5'-UUCAC-3'. Preferentially binds to N6-methyladenosine (m6A)-containing mRNAs and increases their stability. Mediates the specific association of Vg1 RNA to microtubules. Binds specifically to the vegetal localization elements (VLE or VgLE) in the 3'-UTR of Vg1 and VegT mRNAs. Binds to the Vg1 and VegT mRNAs in both the nucleus and the cytoplasm. May regulate mRNA translation. Acts as a transcription regulator. Binds to the 5'-[TA]GGTTACT-3' motif within element 3 of the TFIIIA gene promoter. The protein is Insulin-like growth factor 2 mRNA-binding protein 3-A (igf2bp3-a) of Xenopus laevis (African clawed frog).